A 175-amino-acid polypeptide reads, in one-letter code: ATP synthase subunit b (175 aa).

Residues 20 to 40 (LIFWTAVTFVIVLLILKQLAW) traverse the membrane as a helical segment.

The protein belongs to the ATPase B chain family. F-type ATPases have 2 components, F(1) - the catalytic core - and F(0) - the membrane proton channel. F(1) has five subunits: alpha(3), beta(3), gamma(1), delta(1), epsilon(1). F(0) has four main subunits: a(1), b(2) and c(10-14). The alpha and beta chains form an alternating ring which encloses part of the gamma chain. F(1) is attached to F(0) by a central stalk formed by the gamma and epsilon chains, while a peripheral stalk is formed by the delta and b chains.

It localises to the cell inner membrane. F(1)F(0) ATP synthase produces ATP from ADP in the presence of a proton or sodium gradient. F-type ATPases consist of two structural domains, F(1) containing the extramembraneous catalytic core and F(0) containing the membrane proton channel, linked together by a central stalk and a peripheral stalk. During catalysis, ATP synthesis in the catalytic domain of F(1) is coupled via a rotary mechanism of the central stalk subunits to proton translocation. In terms of biological role, component of the F(0) channel, it forms part of the peripheral stalk, linking F(1) to F(0). This chain is ATP synthase subunit b, found in Chlorobium limicola (strain DSM 245 / NBRC 103803 / 6330).